We begin with the raw amino-acid sequence, 438 residues long: 3-phosphoshikimate 1-carboxyvinyltransferase (438 aa).

Lysine 21, serine 22, and arginine 26 together coordinate 3-phosphoshikimate. Phosphoenolpyruvate is bound at residue lysine 21. Phosphoenolpyruvate-binding residues include glycine 93 and arginine 121. 3-phosphoshikimate is bound by residues serine 166, serine 167, glutamine 168, serine 194, aspartate 324, and lysine 351. Phosphoenolpyruvate is bound at residue glutamine 168. Catalysis depends on aspartate 324, which acts as the Proton acceptor. Arginine 355 and arginine 395 together coordinate phosphoenolpyruvate.

It belongs to the EPSP synthase family. As to quaternary structure, monomer.

The protein resides in the cytoplasm. The catalysed reaction is 3-phosphoshikimate + phosphoenolpyruvate = 5-O-(1-carboxyvinyl)-3-phosphoshikimate + phosphate. It participates in metabolic intermediate biosynthesis; chorismate biosynthesis. Functionally, catalyzes the transfer of the enolpyruvyl moiety of phosphoenolpyruvate (PEP) to the 5-hydroxyl of shikimate-3-phosphate (S3P) to produce enolpyruvyl shikimate-3-phosphate and inorganic phosphate. The chain is 3-phosphoshikimate 1-carboxyvinyltransferase from Methanobrevibacter smithii (strain ATCC 35061 / DSM 861 / OCM 144 / PS).